We begin with the raw amino-acid sequence, 154 residues long: RING finger protein 11 (154 aa).

Polar residues predominate over residues Met1–Asp12. Positions Met1–Pro53 are disordered. Residue Gly2 is the site of N-myristoyl glycine attachment. Cys4 carries the S-palmitoyl cysteine lipid modification. A phosphoserine mark is found at Ser14 and Ser25. Positions Pro37 to Tyr40 match the PPxY motif motif. The span at Gln41–Pro51 shows a compositional bias: low complexity. An RING-type zinc finger spans residues Cys99–Met140. Residue Thr135 is modified to Phosphothreonine; by PKB/AKT1.

Interacts (when phosphorylated) with 14-3-3. Interacts with the E3 ubiquitin-ligases NEDD4, ITCH, SMURF2 and WWP1. Also interacts with the E2 ubiquitin-conjugating enzymes UBE2D1 and UBE2N, but neither with CDC34, nor with UBE2L3. Interacts with ZNF350, EPS15 and STAMBP. After TNF stimulation, interacts with TAX1BP1, TNFAIP3 and RIPK1; these interactions are transient and they are lost after 1 hour of stimulation with TNF. Interacts with GGA1. In terms of processing, ubiquitinated in the presence of ITCH, SMURF2 and UBE2D1, as well as WWP1. Phosphorylation by PKB/AKT1 may accelerate degradation by the proteasome. Post-translationally, acylation at both Gly-2 and Cys-4 is required for proper localization to the endosomes.

The protein resides in the early endosome. It localises to the recycling endosome. It is found in the cytoplasm. Its subcellular location is the nucleus. Its function is as follows. Essential component of a ubiquitin-editing protein complex, comprising also TNFAIP3, ITCH and TAX1BP1, that ensures the transient nature of inflammatory signaling pathways. Promotes the association of TNFAIP3 to RIPK1 after TNF stimulation. TNFAIP3 deubiquitinates 'Lys-63' polyubiquitin chains on RIPK1 and catalyzes the formation of 'Lys-48'-polyubiquitin chains. This leads to RIPK1 proteasomal degradation and consequently termination of the TNF- or LPS-mediated activation of NF-kappa-B. Recruits STAMBP to the E3 ubiquitin-ligase SMURF2 for ubiquitination, leading to its degradation by the 26S proteasome. The chain is RING finger protein 11 (RNF11) from Bos taurus (Bovine).